Here is a 164-residue protein sequence, read N- to C-terminus: Disulfide bond formation protein B (164 aa).

Residues 1 to 9 (MTLPSARTC) are Cytoplasmic-facing. The chain crosses the membrane as a helical span at residues 10–26 (FLLGFLFCAALLAAALY). Topologically, residues 27-44 (FQFSGGLEPCPLCISQRI) are periplasmic. Cys-36 and Cys-39 are joined by a disulfide. Residues 45–61 (MVLAVALVFLAAAIHHP) traverse the membrane as a helical segment. Residues 62–68 (ASLGIRA) are Cytoplasmic-facing. Residues 69–85 (YALLGTAVALGGASISG) traverse the membrane as a helical segment. The Periplasmic segment spans residues 86 to 142 (RHVWLLHLPPEEVPECGPGLSYMFRNFPLGDTLKAMLSGTGDCAKVDWTFLGLSMPA). A disulfide bridge connects residues Cys-101 and Cys-128. A helical transmembrane segment spans residues 143–161 (WVLICFLGLGAFSLLQWWN). Residues 162–164 (AER) lie on the Cytoplasmic side of the membrane.

The protein belongs to the DsbB family.

It is found in the cell inner membrane. Functionally, required for disulfide bond formation in some periplasmic proteins. Acts by oxidizing the DsbA protein. In Methylococcus capsulatus (strain ATCC 33009 / NCIMB 11132 / Bath), this protein is Disulfide bond formation protein B.